A 264-amino-acid chain; its full sequence is Thymidylate synthase (264 aa).

Residue Arg-21 participates in dUMP binding. His-51 contributes to the (6R)-5,10-methylene-5,6,7,8-tetrahydrofolate binding site. A dUMP-binding site is contributed by 126 to 127; the sequence is RR. The Nucleophile role is filled by Cys-146. DUMP contacts are provided by residues 166-169, Asn-177, and 207-209; these read RSCD and HLY. Asp-169 contributes to the (6R)-5,10-methylene-5,6,7,8-tetrahydrofolate binding site. Position 263 (Ala-263) interacts with (6R)-5,10-methylene-5,6,7,8-tetrahydrofolate.

The protein belongs to the thymidylate synthase family. Bacterial-type ThyA subfamily. As to quaternary structure, homodimer.

The protein localises to the cytoplasm. It catalyses the reaction dUMP + (6R)-5,10-methylene-5,6,7,8-tetrahydrofolate = 7,8-dihydrofolate + dTMP. It participates in pyrimidine metabolism; dTTP biosynthesis. In terms of biological role, catalyzes the reductive methylation of 2'-deoxyuridine-5'-monophosphate (dUMP) to 2'-deoxythymidine-5'-monophosphate (dTMP) while utilizing 5,10-methylenetetrahydrofolate (mTHF) as the methyl donor and reductant in the reaction, yielding dihydrofolate (DHF) as a by-product. This enzymatic reaction provides an intracellular de novo source of dTMP, an essential precursor for DNA biosynthesis. In Yersinia pestis bv. Antiqua (strain Antiqua), this protein is Thymidylate synthase.